The sequence spans 410 residues: Lissencephaly-1 homolog (410 aa).

The LisH domain occupies 7–39; that stretch reads QRDELNRAIADYLRSNGYEEAYSVFKKEAELDV. Residues 56-82 are a coiled coil; the sequence is TSVIRLQKKVMELESKLNEAKEEFTSG. 7 WD repeats span residues 106-147, 148-187, 190-229, 232-271, 274-333, 336-377, and 378-410; these read GHRS…RTLK, GHTD…CIRT, GHDH…CVKT, GHRE…CKAE, EHEH…CLMT, GHDN…KTLN, and AHEH…WECR.

The protein belongs to the WD repeat LIS1/nudF family. Can self-associate. Component of the cytosolic PAF-AH (I) heterotetrameric enzyme, which is composed of PAFAH1B1 (beta), PAFAH1B2 (alpha2) and PAFAH1B3 (alpha1) subunits. The catalytic activity of the enzyme resides in the alpha1 (PAFAH1B3) and alpha2 (PAFAH1B2) subunits, whereas the beta subunit (PAFAH1B1) has regulatory activity. Trimer formation is not essential for the catalytic activity. Interacts with dynein, dynactin, NDE1 and NDEL1.

The protein resides in the cytoplasm. Its subcellular location is the cytoskeleton. It is found in the microtubule organizing center. The protein localises to the centrosome. Regulatory subunit (beta subunit) of the cytosolic type I platelet-activating factor (PAF) acetylhydrolase (PAF-AH (I)), an enzyme that catalyzes the hydrolyze of the acetyl group at the sn-2 position of PAF and its analogs and participates in PAF inactivation. Regulates the PAF-AH (I) activity in a catalytic dimer composition-dependent manner. Positively regulates the activity of the minus-end directed microtubule motor protein dynein. May enhance dynein-mediated microtubule sliding by targeting dynein to the microtubule plus end. Required for several dynein- and microtubule-dependent processes such as the maintenance of Golgi integrity, the peripheral transport of microtubule fragments and the coupling of the nucleus and centrosome. May be required for proliferation of neuronal precursors and neuronal migration. The chain is Lissencephaly-1 homolog from Gallus gallus (Chicken).